Consider the following 207-residue polypeptide: Coiled-coil domain-containing protein 25 (207 aa).

Topologically, residues Met1–Asp104 are extracellular. The DNA-binding stretch occupies residues Lys20–Glu24. The chain crosses the membrane as a helical span at residues Ile105 to Val121. Positions Arg112–Met189 form a coiled coil. Residues Glu122–Met207 are Cytoplasmic-facing. A compositionally biased stretch (basic and acidic residues) spans Tyr140–Lys183. Residues Tyr140 to Met207 are disordered. Positions Asn184 to Glu198 are enriched in polar residues. At Ser203 the chain carries Phosphoserine.

It belongs to the CCDC25 family. As to quaternary structure, interacts (via cytoplasmic region) with ILK.

It is found in the cell membrane. Its subcellular location is the endomembrane system. Its function is as follows. Transmembrane receptor that senses neutrophil extracellular traps (NETs) and triggers the ILK-PARVB pathway to enhance cell motility. NETs are mainly composed of DNA fibers and are released by neutrophils to bind pathogens during inflammation. Specifically binds NETs on its extracellular region, in particular the 8-OHdG-enriched DNA present in NETs, and recruits ILK, initiating the ILK-PARVB cascade to induce cytoskeleton rearrangement and directional migration of cells. This chain is Coiled-coil domain-containing protein 25, found in Danio rerio (Zebrafish).